The primary structure comprises 541 residues: MNQSLGPSEPEKPQDNTAEDSTEPTPDNHRADLSELRGIPKKQTGIEGFEDISHGGLPLGRTTLVSGTSGTGKTLFAMQFLYNGIVKYQEPGIFVTFEETPADIIRNASSFGWDLQALIDRGQLFILDASPDPEGYEVSGNFDLSALIERIQYAIRKYKAKRVSIDSVTAIFQQYDPAGVVRRELFRLTARLKQANVTTVMTTERTDEYGPIARYGVEEFVSDNVVILRNILEGEKRRRTIEILKLRGTTHMKGEYPFTITNDGINIFPLGAMQLTQRSSNVRVSSGIEKLDEMCGGGFFKDSIILATGATGTGKTSLVSKFLERGCLDGERCILFAYEESRAQLSRNASSWGIDLEEFERQGLLKIICAYPESAGLEDHLQKIKTEMMAFKPSRMAIDSLSALARGVSQNAFRQFVIGVTGLAKQEEITGFFTNTTDQFMGSHSITESHISTITDTIILLQYVEIRGEMARALNVFKMRGSWHDKGIREYLISNAGIQIRDSFRGYERIISGSPTRINVDEKNELSRIVQNVQALEEEGL.

The segment at Met1–Pro40 is disordered. 2 consecutive KaiC domains span residues Ser21–Phe268 and Val282–Leu541. Over residues Pro26–Glu35 the composition is skewed to basic and acidic residues. Positions 70, 71, 72, 73, 74, 75, 110, 245, 246, 247, 249, 251, 261, 311, 312, 313, 314, 315, and 316 each coordinate ATP. Thr74 contacts Mg(2+). Residues Thr316 and Glu339 each contribute to the Mg(2+) site. Trp352 lines the ATP pocket. Ser452 is subject to Phosphoserine; by autocatalysis. Position 453 is a phosphothreonine; by autocatalysis (Thr453). ATP is bound by residues Arg472, Lys478, Met479, Arg480, Ser482, His484, and Lys486.

It belongs to the KaiC family. Homohexamer; hexamerization is dependent on ATP-binding. The KaiABC complex composition changes during the circadian cycle to control KaiC phosphorylation. Complexes KaiC(6), KaiA(2-4):KaiC(6), KaiB(6):KaiC(6) and KaiC(6):KaiB(6):KaiA(12) are among the most important forms, many form cooperatively. KaiC interacts with SasA, activating its autokinase function and leading to RpaA activation. The cofactor is Mg(2+). Phosphorylated on serine and threonine residues by autocatalysis. Has a 4 step phosphorylation cycle; the autokinase acts first on Thr-453, then Ser-452. When Ser-452 is modified KaiC switches to an autophosphatase mode, acting first on phospho-Thr-453 then phospho-Ser-452.

The enzyme catalyses L-seryl-[protein] + ATP = O-phospho-L-seryl-[protein] + ADP + H(+). The catalysed reaction is L-threonyl-[protein] + ATP = O-phospho-L-threonyl-[protein] + ADP + H(+). It carries out the reaction ATP + H2O = ADP + phosphate + H(+). Its activity is regulated as follows. The interaction with KaiA enhances its phosphorylation status, while the interaction with KaiB decreases it. In terms of biological role, central component of the KaiABC oscillator complex, which constitutes the main circadian regulator in cyanobacteria. Complex composition changes during the circadian cycle to control KaiC phosphorylation. KaiA stimulates KaiC autophosphorylation, while KaiB sequesters KaiA, leading to KaiC autodephosphorylation. Clock output pathways impact the RpaA transcriptional regulator. KaiC enhances the autophosphorylation activity of SasA, which then transfers its phosphate group to RpaA to activate it. KaiB and KaiC together enhance the phospho-RpaA dephosphatase activity of CikA. Has a weak, temperature-independent ATPase activity; ATPase activity defines the circadian period. The phosphorylation state of KaiC modulates its ATPase activity and effects KaiB binding. This Parathermosynechococcus lividus (Thermostichus lividus) protein is Circadian clock oscillator protein KaiC.